Reading from the N-terminus, the 106-residue chain is Malonate decarboxylase acyl carrier protein (106 aa).

Ser28 carries the O-(phosphoribosyl dephospho-coenzyme A)serine modification.

The protein belongs to the MdcC family. Post-translationally, covalently binds the prosthetic group of malonate decarboxylase.

It is found in the cytoplasm. Functionally, subunit of malonate decarboxylase, it is an acyl carrier protein to which acetyl and malonyl thioester residues are bound via a 2'-(5''-phosphoribosyl)-3'-dephospho-CoA prosthetic group and turn over during the catalytic mechanism. The protein is Malonate decarboxylase acyl carrier protein of Stenotrophomonas maltophilia (strain K279a).